Consider the following 597-residue polypeptide: Probable bifunctional ADP-ribose hydrolase/ADP-ribosyltransferase (597 aa).

One can recognise a Macro domain in the interval Ser99–His299. Residues Asp118, Ile119, and Asn133 each contribute to the ADP-D-ribose site. The Zn(2+) site is built by Cys139, His144, and Cys146. Residues Cys146, Ile147, Asp148, Ser244, Thr245, Gly246, and Phe248 each coordinate ADP-D-ribose. The Deacetylase sirtuin-type domain occupies Glu307–Glu597. NAD(+) contacts are provided by residues Ala333, Ser418–Asp421, and Gln438. Zn(2+) is bound by residues Cys446, Cys450, Cys485, and Cys488. Val584 contributes to the NAD(+) binding site.

This sequence in the N-terminal section; belongs to the MacroD-type family. Zn-Macro subfamily. It in the C-terminal section; belongs to the sirtuin family. Class M subfamily. In terms of assembly, monomer. Requires Zn(2+) as cofactor.

The enzyme catalyses 5-O-(ADP-D-ribosyl)-L-glutamyl-[protein] + H2O = L-glutamyl-[protein] + ADP-D-ribose + H(+). Functionally, is probably a bifunctional enzyme with ADP-ribosyltransferase and ADP-ribosylhydrolase activities. In vitro, can act as an ADP-ribosylhydrolase that hydrolyzes ADP-ribosyl-glutamate bonds. It can remove the ADP-ribosyl modification from the human mono-ADP-ribosylated PARP1 E988Q mutant, which is primarily modified on glutamate site with only minor aspartate contribution. It cannot hydrolyze the ADP-ribosyl-arpartate bond in ribosylated S.pyogenes GcvH-L. This is Probable bifunctional ADP-ribose hydrolase/ADP-ribosyltransferase from Fusarium oxysporum f. sp. cubense.